The chain runs to 449 residues: Interferon-related developmental regulator 1 (449 aa).

The span at 1–10 (MPKNKKRNAP) shows a compositional bias: basic residues. The segment at 1–41 (MPKNKKRNAPHRGGGGGGGSGAATSAATTGGPHRTVQPFSD) is disordered. Residues 12-21 (RGGGGGGGSG) are compositionally biased toward gly residues. The span at 22–31 (AATSAATTGG) shows a compositional bias: low complexity.

Belongs to the IFRD family. In terms of assembly, interacts with PSIP1/LEDGF. As to expression, expressed at high levels in the embryonic brain in the period related to neuroblast proliferation and differentiation.

The protein localises to the cytoplasm. The protein resides in the cell membrane. It is found in the nucleus. Probably participates in neurogenesis. Could play a role in regulating gene activity in the proliferative and/or differentiative pathways induced by NGF. This chain is Interferon-related developmental regulator 1 (Ifrd1), found in Rattus norvegicus (Rat).